The chain runs to 153 residues: Putative transmembrane protein INAFM2 (153 aa).

Residues 1-23 are compositionally biased toward basic and acidic residues; that stretch reads MKERDAAPAERGKPATYTGDKKA. Residues 1 to 24 form a disordered region; that stretch reads MKERDAAPAERGKPATYTGDKKAK. The helical transmembrane segment at 36–56 threads the bilayer; it reads LATVFAYVLSVSLAAIVLAVY. The tract at residues 66–153 is disordered; it reads AGTSGGAAGP…EETAAAPGSR (88 aa). A compositionally biased stretch (low complexity) spans 79–101; that stretch reads GSNATGPSGTSGAAAAGPNTTGS. The segment covering 118 to 131 has biased composition (pro residues); that stretch reads PAPPEPPADSPPAG.

Its subcellular location is the membrane. The polypeptide is Putative transmembrane protein INAFM2 (Homo sapiens (Human)).